We begin with the raw amino-acid sequence, 208 residues long: MTQLPRRGVCLVISAPSGAGKSTIANALRASEPTLRHSVSVTTRSPRPGEVEGVHYHFRDIAEFRRMAADGELLEWAEVFGRGYGTPRAPVEEALDAGHDMVFDIDWQGHRLLRAALPDDVVSLFVLPPSLEELERRLNKRASDHPEEIARRMKAALDEISHWSEFDHTIINSDLDTAISQARSVLTAARLATRRQRNLLDMVASFSR.

The Guanylate kinase-like domain maps to 8 to 187 (GVCLVISAPS…AISQARSVLT (180 aa)). 15 to 22 (APSGAGKS) contacts ATP.

The protein belongs to the guanylate kinase family.

The protein localises to the cytoplasm. It catalyses the reaction GMP + ATP = GDP + ADP. Its function is as follows. Essential for recycling GMP and indirectly, cGMP. The polypeptide is Guanylate kinase (Gluconobacter oxydans (strain 621H) (Gluconobacter suboxydans)).